The primary structure comprises 190 residues: Ribosome hibernation promotion factor (190 aa).

The protein belongs to the HPF/YfiA ribosome-associated protein family. Long HPF subfamily. In terms of assembly, interacts with 100S ribosomes.

It is found in the cytoplasm. Functionally, required for dimerization of active 70S ribosomes into 100S ribosomes in stationary phase; 100S ribosomes are translationally inactive and sometimes present during exponential growth. This Staphylococcus saprophyticus subsp. saprophyticus (strain ATCC 15305 / DSM 20229 / NCIMB 8711 / NCTC 7292 / S-41) protein is Ribosome hibernation promotion factor.